The sequence spans 362 residues: Chromobox protein homolog 8 (362 aa).

One can recognise a Chromo domain in the interval 11–69 (FAAEALLKRRIRKGRMEYLVKWKGWSQKYSTWEPEENILDARLLAAFEEREREMELYGP). Positions 90 to 100 (KTYEFRSDSTR) are enriched in basic and acidic residues. The interval 90–197 (KTYEFRSDST…LGEPSAGLGE (108 aa)) is disordered. The residue at position 110 (Ser-110) is a Phosphoserine. Basic and acidic residues predominate over residues 142-162 (DPPRDRDRERDRGTSRVDDKP). Phosphoserine is present on residues Ser-164 and Ser-229. A Phosphotyrosine modification is found at Tyr-234. Phosphoserine occurs at positions 238, 284, 305, and 325.

As to quaternary structure, component of a PRC1-like complex. Interacts with RING1, RNF2, PCGF1, PCGF2, PCGF3, BMI1, PCGF5, PCGF6 and PHC2. Interacts with histone H3. Interacts with MLLT3. Interacts with PHC2. Interacts (via chromodomain) with single-stranded RNA.

It localises to the nucleus. It is found in the chromosome. In terms of biological role, component of a Polycomb group (PcG) multiprotein PRC1-like complex, a complex class required to maintain the transcriptionally repressive state of many genes, including Hox genes, throughout development. PcG PRC1 complex acts via chromatin remodeling and modification of histones; it mediates monoubiquitination of histone H2A 'Lys-119', rendering chromatin heritably changed in its expressibility. This is Chromobox protein homolog 8 (Cbx8) from Mus musculus (Mouse).